The primary structure comprises 77 residues: Acyl carrier protein (77 aa).

The 76-residue stretch at 2–77 (AEVLEKVTKI…DAVKYIEANA (76 aa)) folds into the Carrier domain. Ser37 is subject to O-(pantetheine 4'-phosphoryl)serine.

Belongs to the acyl carrier protein (ACP) family. 4'-phosphopantetheine is transferred from CoA to a specific serine of apo-ACP by AcpS. This modification is essential for activity because fatty acids are bound in thioester linkage to the sulfhydryl of the prosthetic group.

The protein resides in the cytoplasm. It functions in the pathway lipid metabolism; fatty acid biosynthesis. Functionally, carrier of the growing fatty acid chain in fatty acid biosynthesis. This is Acyl carrier protein from Listeria innocua serovar 6a (strain ATCC BAA-680 / CLIP 11262).